A 110-amino-acid chain; its full sequence is Nucleotide-binding protein HI1146 homolog (110 aa).

This sequence belongs to the RapZ-like family.

Displays ATPase and GTPase activities. The chain is Nucleotide-binding protein HI1146 homolog from Aggregatibacter actinomycetemcomitans (Actinobacillus actinomycetemcomitans).